The following is a 1012-amino-acid chain: F-box DNA helicase 1 (1012 aa).

The interval 1–54 is disordered; the sequence is MHLTADDCEALSRSTEGLSSLTQPLNQRRSRGDVNRGLQPTHRTRTQPGAQGRQ. Over residues 12–27 the composition is skewed to polar residues; that stretch reads SRSTEGLSSLTQPLNQ. Positions 185–234 constitute an F-box domain; sequence QGSIEDLPDEVLRSIFAFLPVTDLYQSLSLVCRRWRIIVGDPWFIPWKKL. Residues 427-692 enclose the UvrD-like helicase ATP-binding domain; it reads THEQQRILNH…YYLTQSFRFG (266 aa). 448 to 455 is a binding site for ATP; it reads AFAGTGKT.

It belongs to the helicase family. UvrD subfamily. Part of the SCF (SKP1-CUL1-F-box) E3 ubiquitin-protein ligase complex SCF(FBH1).

The protein localises to the nucleus. Its subcellular location is the chromosome. It carries out the reaction Couples ATP hydrolysis with the unwinding of duplex DNA by translocating in the 3'-5' direction.. The catalysed reaction is ATP + H2O = ADP + phosphate + H(+). Its pathway is protein modification; protein ubiquitination. 3'-5' DNA helicase and substrate-recognition component of the SCF(FBH1) E3 ubiquitin ligase complex that plays a key role in response to stalled/damaged replication forks. Involved in genome maintenance by acting as an anti-recombinogenic helicase and preventing extensive strand exchange during homologous recombination: promotes RAD51 filament dissolution from stalled forks, thereby inhibiting homologous recombination and preventing excessive recombination. Also promotes cell death and DNA double-strand breakage in response to replication stress: promotes the endonucleolytic DNA cleavage following prolonged replication stress via its helicase activity, possibly to eliminate cells with excessive replication stress. The polypeptide is F-box DNA helicase 1 (Gallus gallus (Chicken)).